A 316-amino-acid chain; its full sequence is Acetyl-coenzyme A carboxylase carboxyl transferase subunit alpha (316 aa).

One can recognise a CoA carboxyltransferase C-terminal domain in the interval 36-290 (PLRTQLETLR…GSVISRHLDD (255 aa)).

It belongs to the AccA family. As to quaternary structure, acetyl-CoA carboxylase is a heterohexamer composed of biotin carboxyl carrier protein (AccB), biotin carboxylase (AccC) and two subunits each of ACCase subunit alpha (AccA) and ACCase subunit beta (AccD).

The protein resides in the cytoplasm. It carries out the reaction N(6)-carboxybiotinyl-L-lysyl-[protein] + acetyl-CoA = N(6)-biotinyl-L-lysyl-[protein] + malonyl-CoA. Its pathway is lipid metabolism; malonyl-CoA biosynthesis; malonyl-CoA from acetyl-CoA: step 1/1. In terms of biological role, component of the acetyl coenzyme A carboxylase (ACC) complex. First, biotin carboxylase catalyzes the carboxylation of biotin on its carrier protein (BCCP) and then the CO(2) group is transferred by the carboxyltransferase to acetyl-CoA to form malonyl-CoA. The polypeptide is Acetyl-coenzyme A carboxylase carboxyl transferase subunit alpha (Deinococcus radiodurans (strain ATCC 13939 / DSM 20539 / JCM 16871 / CCUG 27074 / LMG 4051 / NBRC 15346 / NCIMB 9279 / VKM B-1422 / R1)).